The primary structure comprises 148 residues: Lysozyme C (148 aa).

The signal sequence occupies residues 1 to 18; sequence MKVLIILGLVLLSVMVQG. The 130-residue stretch at 19-148 folds into the C-type lysozyme domain; sequence KVFERCELAR…VSQYVQGCGV (130 aa). Cystine bridges form between C24-C146, C48-C134, C83-C99, and C95-C113. Catalysis depends on residues E53 and D71.

The protein belongs to the glycosyl hydrolase 22 family. Monomer.

The enzyme catalyses Hydrolysis of (1-&gt;4)-beta-linkages between N-acetylmuramic acid and N-acetyl-D-glucosamine residues in a peptidoglycan and between N-acetyl-D-glucosamine residues in chitodextrins.. Its function is as follows. Lysozymes have primarily a bacteriolytic function; those in tissues and body fluids are associated with the monocyte-macrophage system and enhance the activity of immunoagents. The polypeptide is Lysozyme C (LYZ) (Callithrix jacchus (White-tufted-ear marmoset)).